The chain runs to 306 residues: Foldase protein PrsA (306 aa).

Positions 1–20 are cleaved as a signal peptide; sequence MRRKIALFLALIFVGVSLVS. C21 carries N-palmitoyl cysteine lipidation. C21 carries the S-diacylglycerol cysteine lipid modification. A PpiC domain is found at 165–255; that stretch reads FEVMRARHIL…YGYHIIKSEG (91 aa).

It belongs to the PrsA family.

Its subcellular location is the cell membrane. It carries out the reaction [protein]-peptidylproline (omega=180) = [protein]-peptidylproline (omega=0). Functionally, plays a major role in protein secretion by helping the post-translocational extracellular folding of several secreted proteins. This chain is Foldase protein PrsA, found in Caldanaerobacter subterraneus subsp. tengcongensis (strain DSM 15242 / JCM 11007 / NBRC 100824 / MB4) (Thermoanaerobacter tengcongensis).